Reading from the N-terminus, the 217-residue chain is Probable transaldolase (217 aa).

Lys-83 serves as the catalytic Schiff-base intermediate with substrate.

This sequence belongs to the transaldolase family. Type 3B subfamily.

The protein resides in the cytoplasm. The catalysed reaction is D-sedoheptulose 7-phosphate + D-glyceraldehyde 3-phosphate = D-erythrose 4-phosphate + beta-D-fructose 6-phosphate. It participates in carbohydrate degradation; pentose phosphate pathway; D-glyceraldehyde 3-phosphate and beta-D-fructose 6-phosphate from D-ribose 5-phosphate and D-xylulose 5-phosphate (non-oxidative stage): step 2/3. In terms of biological role, transaldolase is important for the balance of metabolites in the pentose-phosphate pathway. This chain is Probable transaldolase, found in Bartonella quintana (strain Toulouse) (Rochalimaea quintana).